A 158-amino-acid chain; its full sequence is Transcription elongation factor GreA (158 aa).

It belongs to the GreA/GreB family.

Necessary for efficient RNA polymerase transcription elongation past template-encoded arresting sites. The arresting sites in DNA have the property of trapping a certain fraction of elongating RNA polymerases that pass through, resulting in locked ternary complexes. Cleavage of the nascent transcript by cleavage factors such as GreA or GreB allows the resumption of elongation from the new 3'terminus. GreA releases sequences of 2 to 3 nucleotides. In Psychrobacter sp. (strain PRwf-1), this protein is Transcription elongation factor GreA.